An 88-amino-acid polypeptide reads, in one-letter code: Small ribosomal subunit protein bS20 (88 aa).

Over residues 1-11 (MANIKSSEKDI) the composition is skewed to basic and acidic residues. 2 disordered regions span residues 1–31 (MANI…LRTQ) and 69–88 (SKNA…SSAA).

Belongs to the bacterial ribosomal protein bS20 family.

Binds directly to 16S ribosomal RNA. This chain is Small ribosomal subunit protein bS20, found in Leptospira interrogans serogroup Icterohaemorrhagiae serovar copenhageni (strain Fiocruz L1-130).